Reading from the N-terminus, the 403-residue chain is Guanine nucleotide-binding protein alpha-8 subunit (403 aa).

G2 carries the N-myristoyl glycine lipid modification. Residue C3 is the site of S-palmitoyl cysteine attachment. Positions 31 to 356 (LDFRILLLGA…KVLMKATKDL (326 aa)) constitute a G-alpha domain. The segment at 34 to 47 (RILLLGAGESGKST) is G1 motif. GTP contacts are provided by residues 39–46 (GAGESGKS), 174–180 (IMTRVRT), 199–203 (DVGGQ), 268–271 (NKKD), and A324. 2 residues coordinate Mg(2+): S46 and T180. The G2 motif stretch occupies residues 172 to 180 (DCIMTRVRT). The tract at residues 195-204 (FRVVDVGGQR) is G3 motif. The G4 motif stretch occupies residues 264–271 (FLVLNKKD). The interval 322-327 (IAARYK) is G5 motif. The segment at 353-403 (TKDLKKSSKQSSKSSLGNSTQNNSNNNNNNNNSNNNNGQTTIDGATAKINS) is disordered. Low complexity predominate over residues 374-389 (NNSNNNNNNNNSNNNN). Over residues 390–403 (GQTTIDGATAKINS) the composition is skewed to polar residues.

The protein belongs to the G-alpha family. As to quaternary structure, g proteins are composed of 3 units; alpha, beta and gamma. The alpha chain contains the guanine nucleotide binding site.

Its function is as follows. Guanine nucleotide-binding proteins (G proteins) are involved as modulators or transducers in various transmembrane signaling systems. G alpha-8 is a potential analog for the G(s)-like G-proteins which stimulate adenylate cyclase in mammals. This chain is Guanine nucleotide-binding protein alpha-8 subunit (gpaH), found in Dictyostelium discoideum (Social amoeba).